We begin with the raw amino-acid sequence, 1085 residues long: Solute carrier family 12 member 4 (1085 aa).

Residues 1 to 119 (MPHFTVVPVD…RRAAKAPSMG (119 aa)) are Cytoplasmic-facing. Ser-24 bears the Phosphoserine mark. The span at 28-46 (YGERAEREDPDGHGNHRES) shows a compositional bias: basic and acidic residues. The segment at 28 to 47 (YGERAEREDPDGHGNHRESS) is disordered. Residues Ser-47, Ser-59, Ser-81, and Ser-88 each carry the phosphoserine modification. Residues 120 to 141 (TLMGVYLPCLQNIFGVILFLRL) form a discontinuously helical membrane-spanning segment. Residues Asn-131 and Ile-132 each coordinate K(+). The Extracellular segment spans residues 142-149 (TWMVGTAG). Residues 150–172 (VLQALLIVLICCCCTLLTAISMS) traverse the membrane as a helical segment. Over 173-196 (AIATNGVVPAGGSYFMISRSLGPE) the chain is Cytoplasmic. Residues 197-225 (FGGAVGLCFYLGTTFAAAMYILGAIEILL) form a helical membrane-spanning segment. Tyr-216 is a binding site for K(+). The Extracellular segment spans residues 226 to 248 (TYIAPPAAIFYPSGTHDTSNATL). A glycan (N-linked (GlcNAc...) asparagine) is linked at Asn-245. 2 helical membrane-spanning segments follow: residues 249–271 (NNMR…VGVK) and 272–297 (YVNK…GGIK). Residues 298–419 (SMFDPPVFPV…LYVVADIATS (122 aa)) are Extracellular-facing. An intrachain disulfide couples Cys-308 to Cys-323. N-linked (GlcNAc...) asparagine glycosylation is found at Asn-312, Asn-331, and Asn-347. A disulfide bridge links Cys-343 with Cys-353. The helical transmembrane segment at 420–440 (FTVLVGIFFPSVTGIMAGSNR) threads the bilayer. The K(+) site is built by Pro-429 and Thr-432. Residues Gly-433, Ile-434, and Met-435 each contribute to the chloride site. The Cytoplasmic segment spans residues 441 to 450 (SGDLRDAQKS). A helical membrane pass occupies residues 451–473 (IPVGTILAIVTTSLVYFSSVVLF). The Extracellular portion of the chain corresponds to 474 to 504 (GACIEGVVLRDKYGDGVSRNLVVGTLAWPSP). The chain crosses the membrane as a helical span at residues 505 to 531 (WVIVVGSFFSTCGAGLQSLTGAPRLLQ). Residues 532 to 554 (AIAKDNIIPFLRVFGHGKANGEP) lie on the Cytoplasmic side of the membrane. Helical transmembrane passes span 555–575 (TWAL…ASLD) and 576–598 (MVAP…ACAV). A chloride-binding site is contributed by Tyr-589. The Cytoplasmic portion of the chain corresponds to 599–612 (QTLLRTPNWRPRFK). 2 consecutive transmembrane segments (helical) span residues 613–635 (YYHW…VSSW) and 636–651 (YYAL…IYKY). At 652–1085 (IEYQGAEKEW…GGREVITIYS (434 aa)) the chain is on the cytoplasmic side. A scissor helix region spans residues 665-681 (IRGLSLSAARYALLRLE). The ATP site is built by Leu-697, Lys-699, Lys-707, Tyr-708, and Val-730. Ser-734 bears the Phosphoserine mark. ATP is bound by residues Gly-794, Trp-795, and Tyr-797. A phosphoserine mark is found at Ser-916 and Ser-967. Thr-983 carries the post-translational modification Phosphothreonine. Ser-1050 carries the post-translational modification Phosphoserine.

Belongs to the SLC12A transporter family. K/Cl co-transporter subfamily. Homodimer; adopts a domain-swap conformation at the scissor helices connecting the transmembrane domain and C-terminal domain. Heterodimer with other K-Cl cotransporters. In terms of processing, N-glycosylated. Post-translationally, phosphorylated, phosphorylation may regulate transporter activity.

The protein resides in the cell membrane. It catalyses the reaction K(+)(in) + chloride(in) = K(+)(out) + chloride(out). Inhibited by WNK3. Mediates electroneutral potassium-chloride cotransport when activated by cell swelling. May contribute to cell volume homeostasis in single cells. May be involved in the regulation of basolateral Cl(-) exit in NaCl absorbing epithelia. The protein is Solute carrier family 12 member 4 (SLC12A4) of Oryctolagus cuniculus (Rabbit).